The following is a 168-amino-acid chain: NADH dehydrogenase [ubiquinone] 1 alpha subcomplex assembly factor 2 (168 aa).

The segment covering 108–118 (KEKLLQEESNK) has biased composition (basic and acidic residues). Positions 108-168 (KEKLLQEESN…MPHGDKGHSQ (61 aa)) are disordered. S133 bears the Phosphoserine mark. Over residues 144–155 (ESPTSTGKTFQP) the composition is skewed to polar residues.

This sequence belongs to the complex I NDUFA12 subunit family. Interacts with ARMC9.

The protein resides in the mitochondrion. Its function is as follows. Acts as a molecular chaperone for mitochondrial complex I assembly. Complex I functions in the transfer of electrons from NADH to the respiratory chain. The immediate electron acceptor for the enzyme is believed to be ubiquinone. Is involved in the initial steps of cilia formation, including removal of CP110 from the mother centrioles, docking of membrane vesicles to the mother centrioles, and establishment of the transition zone. This is NADH dehydrogenase [ubiquinone] 1 alpha subcomplex assembly factor 2 (NDUFAF2) from Bos taurus (Bovine).